The sequence spans 261 residues: Cytochrome c oxidase subunit 3 (261 aa).

At 1–15 the chain is on the mitochondrial matrix side; it reads MAHQAHSYHMVDPSP. The helical transmembrane segment at 16–34 threads the bilayer; the sequence is WPIFGAITALLTTSGLIMW. Over 35-40 the chain is Mitochondrial intermembrane; the sequence is FHYNSI. The chain crosses the membrane as a helical span at residues 41-66; the sequence is ALLTAGLLSMLLVMIQWWRDVVREST. At 67–72 the chain is on the mitochondrial matrix side; it reads FQGHHT. A helical transmembrane segment spans residues 73 to 105; the sequence is PTVQKGLRYGMILFITSEAFFFLGFFWAFFHSS. The Mitochondrial intermembrane segment spans residues 106–128; sequence LAPTPELGGQWPPTGIKPLNPLE. A helical membrane pass occupies residues 129-152; sequence VPLLNTAILLASGVTVTWAHHSIT. Residues 153–155 lie on the Mitochondrial matrix side of the membrane; the sequence is EGN. Residues 156 to 183 traverse the membrane as a helical segment; the sequence is RKQAIHALTLTILLGFYFTALQAMEYHE. At 184-190 the chain is on the mitochondrial intermembrane side; the sequence is ASFSIAD. A helical transmembrane segment spans residues 191 to 223; it reads SVYGSTFFVATGFHGLHVIIGSSFLTICLLRLI. Residues 224–232 lie on the Mitochondrial matrix side of the membrane; that stretch reads KFHFTSNHH. Residues 233-256 form a helical membrane-spanning segment; that stretch reads FGFEAAAWYWHFVDIIWLFLYMSM. Over 257 to 261 the chain is Mitochondrial intermembrane; the sequence is YWWGS.

Belongs to the cytochrome c oxidase subunit 3 family. In terms of assembly, component of the cytochrome c oxidase (complex IV, CIV), a multisubunit enzyme composed of 14 subunits. The complex is composed of a catalytic core of 3 subunits MT-CO1, MT-CO2 and MT-CO3, encoded in the mitochondrial DNA, and 11 supernumerary subunits COX4I, COX5A, COX5B, COX6A, COX6B, COX6C, COX7A, COX7B, COX7C, COX8 and NDUFA4, which are encoded in the nuclear genome. The complex exists as a monomer or a dimer and forms supercomplexes (SCs) in the inner mitochondrial membrane with NADH-ubiquinone oxidoreductase (complex I, CI) and ubiquinol-cytochrome c oxidoreductase (cytochrome b-c1 complex, complex III, CIII), resulting in different assemblies (supercomplex SCI(1)III(2)IV(1) and megacomplex MCI(2)III(2)IV(2)).

The protein resides in the mitochondrion inner membrane. It carries out the reaction 4 Fe(II)-[cytochrome c] + O2 + 8 H(+)(in) = 4 Fe(III)-[cytochrome c] + 2 H2O + 4 H(+)(out). Functionally, component of the cytochrome c oxidase, the last enzyme in the mitochondrial electron transport chain which drives oxidative phosphorylation. The respiratory chain contains 3 multisubunit complexes succinate dehydrogenase (complex II, CII), ubiquinol-cytochrome c oxidoreductase (cytochrome b-c1 complex, complex III, CIII) and cytochrome c oxidase (complex IV, CIV), that cooperate to transfer electrons derived from NADH and succinate to molecular oxygen, creating an electrochemical gradient over the inner membrane that drives transmembrane transport and the ATP synthase. Cytochrome c oxidase is the component of the respiratory chain that catalyzes the reduction of oxygen to water. Electrons originating from reduced cytochrome c in the intermembrane space (IMS) are transferred via the dinuclear copper A center (CU(A)) of subunit 2 and heme A of subunit 1 to the active site in subunit 1, a binuclear center (BNC) formed by heme A3 and copper B (CU(B)). The BNC reduces molecular oxygen to 2 water molecules using 4 electrons from cytochrome c in the IMS and 4 protons from the mitochondrial matrix. The sequence is that of Cytochrome c oxidase subunit 3 (MT-CO3) from Coturnix japonica (Japanese quail).